The sequence spans 53 residues: MKHVNTLLMQELRLLICELKRLKLSAVSDPDFSQEKIHAELDSLLCKLSRHFD.

In terms of biological role, no function has yet been ascribed to K protein. The sequence is that of K protein (K) from Enterobacteria phage phiK (Bacteriophage phi-K).